A 180-amino-acid chain; its full sequence is 2-oxoglutarate dehydrogenase, mitochondrial (180 aa).

Lysine 14 is subject to N6-succinyllysine. Serine 40 is subject to Phosphoserine. Arginine 64 is a thiamine diphosphate binding site.

This sequence belongs to the alpha-ketoglutarate dehydrogenase family. Homodimer. The 2-oxoglutarate dehydrogenase complex is composed of OGDH (2-oxoglutarate dehydrogenase; E1), DLST (dihydrolipoamide succinyltransferase; E2) and DLD (dihydrolipoamide dehydrogenase; E3). It contains multiple copies of the three enzymatic components (E1, E2 and E3). In the nucleus, the 2-oxoglutarate dehydrogenase complex associates with KAT2A. Interacts with ABHD11; this interaction maintains the functional lipoylation of the 2-oxoglutarate dehydrogenase complex. It depends on thiamine diphosphate as a cofactor. Mg(2+) is required as a cofactor.

It is found in the mitochondrion matrix. The protein resides in the nucleus. It carries out the reaction N(6)-[(R)-lipoyl]-L-lysyl-[protein] + 2-oxoglutarate + H(+) = N(6)-[(R)-S(8)-succinyldihydrolipoyl]-L-lysyl-[protein] + CO2. With respect to regulation, calcium ions and ADP stimulate, whereas ATP and NADH reduce catalytic activity. In terms of biological role, 2-oxoglutarate dehydrogenase (E1) component of the 2-oxoglutarate dehydrogenase complex (OGDHC), which mediates the decarboxylation of alpha-ketoglutarate. The 2-oxoglutarate dehydrogenase complex catalyzes the overall conversion of 2-oxoglutarate to succinyl-CoA and CO(2). The 2-oxoglutarate dehydrogenase complex is mainly active in the mitochondrion. A fraction of the 2-oxoglutarate dehydrogenase complex also localizes in the nucleus and is required for lysine succinylation of histones: associates with KAT2A on chromatin and provides succinyl-CoA to histone succinyltransferase KAT2A. This is 2-oxoglutarate dehydrogenase, mitochondrial from Mesocricetus auratus (Golden hamster).